An 86-amino-acid chain; its full sequence is Small ribosomal subunit protein bS20 (86 aa).

Belongs to the bacterial ribosomal protein bS20 family.

Its function is as follows. Binds directly to 16S ribosomal RNA. In Pseudarthrobacter chlorophenolicus (strain ATCC 700700 / DSM 12829 / CIP 107037 / JCM 12360 / KCTC 9906 / NCIMB 13794 / A6) (Arthrobacter chlorophenolicus), this protein is Small ribosomal subunit protein bS20.